A 429-amino-acid chain; its full sequence is Enolase (429 aa).

A (2R)-2-phosphoglycerate-binding site is contributed by Gln166. The active-site Proton donor is the Glu208. The Mg(2+) site is built by Asp245, Glu289, and Asp316. 4 residues coordinate (2R)-2-phosphoglycerate: Lys341, Arg370, Ser371, and Lys392. Catalysis depends on Lys341, which acts as the Proton acceptor.

It belongs to the enolase family. In terms of assembly, component of the RNA degradosome, a multiprotein complex involved in RNA processing and mRNA degradation. It depends on Mg(2+) as a cofactor.

The protein localises to the cytoplasm. The protein resides in the secreted. It is found in the cell surface. The catalysed reaction is (2R)-2-phosphoglycerate = phosphoenolpyruvate + H2O. Its pathway is carbohydrate degradation; glycolysis; pyruvate from D-glyceraldehyde 3-phosphate: step 4/5. Functionally, catalyzes the reversible conversion of 2-phosphoglycerate (2-PG) into phosphoenolpyruvate (PEP). It is essential for the degradation of carbohydrates via glycolysis. This chain is Enolase, found in Acinetobacter baumannii (strain AB307-0294).